Reading from the N-terminus, the 437-residue chain is Probable peptidoglycan-N-acetylglucosamine deacetylase ARB_03699 (437 aa).

The N-terminal stretch at 1-20 (MLMRLYTFFAAALLACCAAA) is a signal peptide. A disordered region spans residues 47 to 132 (STRAATTTTT…STSAAAPSTP (86 aa)). Asn-99 is a glycosylation site (N-linked (GlcNAc...) asparagine). A NodB homology domain is found at 149–334 (GTVAITFDDG…EVKRRGLKAV (186 aa)). The Proton acceptor role is filled by Asp-156. Zn(2+) is bound by residues Asp-157, His-209, and His-213. Residue Tyr-251 participates in substrate binding. The Proton donor role is filled by His-308. A compositionally biased stretch (low complexity) spans 350-370 (TTPVQVPTGTSTTSPTATPTS). The interval 350–384 (TTPVQVPTGTSTTSPTATPTSPGTPPPAPTQPGVA) is disordered. Residues 389-435 (KWHTVVSGDTCYDIAAANGISLDNLYKWNPAVGTSCASLWLGYAVCV) form the LysM domain.

Zn(2+) serves as cofactor. It depends on Co(2+) as a cofactor.

The protein localises to the secreted. It carries out the reaction peptidoglycan-N-acetyl-D-glucosamine + H2O = peptidoglycan-D-glucosamine + acetate.. In terms of biological role, catalyzes the deacetylation of N-acetylglucosamine (GlcNAc) residues in peptidoglycan. This is Probable peptidoglycan-N-acetylglucosamine deacetylase ARB_03699 from Arthroderma benhamiae (strain ATCC MYA-4681 / CBS 112371) (Trichophyton mentagrophytes).